The primary structure comprises 262 residues: Tropinone reductase homolog At2g29290 (262 aa).

13–37 (LVTGGTKGIGEAVVEELSILGARVH) contributes to the NADP(+) binding site. S146 lines the substrate pocket. Y159 acts as the Proton acceptor in catalysis.

It belongs to the short-chain dehydrogenases/reductases (SDR) family. SDR65C subfamily.

The sequence is that of Tropinone reductase homolog At2g29290 from Arabidopsis thaliana (Mouse-ear cress).